The primary structure comprises 66 residues: UPF0337 protein RPA4217 (66 aa).

The protein belongs to the UPF0337 (CsbD) family.

This Rhodopseudomonas palustris (strain ATCC BAA-98 / CGA009) protein is UPF0337 protein RPA4217.